Here is a 539-residue protein sequence, read N- to C-terminus: Efflux pump roqT (539 aa).

The interval 1–25 (MEKEVATDPLPQEIPSDAPDEGGSL) is disordered. Transmembrane regions (helical) follow at residues 36–56 (VSLT…VTII), 108–128 (LFLF…VGLI), 133–153 (IAGL…AQTV), 160–180 (VFTA…PPLG), 191–211 (WCFY…LFFF), 233–253 (IGSF…QWGG), 262–282 (RIIV…AVQI), 305–325 (WFAI…PIWF), 338–360 (VMNL…LVTI), 362–384 (GYYN…LLST), 395–415 (IGYQ…PFMV), and 502–522 (AFYV…ALEW).

This sequence belongs to the major facilitator superfamily. TCR/Tet family.

It is found in the membrane. In terms of biological role, efflux pump; part of the gene cluster that mediates the biosynthesis of the mycotoxins roquefortine C and meleagrin. This chain is Efflux pump roqT, found in Penicillium rubens (strain ATCC 28089 / DSM 1075 / NRRL 1951 / Wisconsin 54-1255) (Penicillium chrysogenum).